The following is a 347-amino-acid chain: Endophilin-A3 (347 aa).

A membrane-binding amphipathic helix region spans residues 1–21 (MSVAGLKKQFHKASQLFSEKI). Positions 18-249 (SEKISGAEGT…LELRIALASQ (232 aa)) constitute a BAR domain. A required for dimerization upon membrane association region spans residues 60–87 (PNPAYRAKLGMLNTMSKLRGQVKATGYP). Residues 180 to 201 (EEEIRQAVEKFEESKELAERSM) are a coiled coil. The interval 218-254 (FVEAALDYHRQSTEILQELQNKLELRIALASQVPRRD) is interaction with ARC. Positions 255 to 284 (YMPKPVNTSSTNANGVEPSSSSKLTGTDIP) are disordered. Residues 260 to 284 (VNTSSTNANGVEPSSSSKLTGTDIP) are compositionally biased toward polar residues. The region spanning 285–344 (SDQPCCRGLYDFEPENEGELGFKEGDIITLTNQIDENWYEGMLRGESGFFPINYVEVIVP) is the SH3 domain.

Belongs to the endophilin family. As to quaternary structure, interacts with SGIP1 and DYDC1. Interacts with FASLG. Interacts with ATXN2. Interacts with BIN2. Interacts with ARC, DNM1 and SYNJ1. As to expression, expressed at high level in testis and at lower level in brain and liver.

It localises to the cytoplasm. Its subcellular location is the early endosome membrane. Its function is as follows. Implicated in endocytosis. May recruit other proteins to membranes with high curvature. This chain is Endophilin-A3 (Sh3gl3), found in Rattus norvegicus (Rat).